The sequence spans 260 residues: Multiple myeloma tumor-associated protein 2 homolog (260 aa).

Gly residues predominate over residues 1 to 11; that stretch reads MFGSNRGGVRG. Residues 1 to 21 are disordered; the sequence is MFGSNRGGVRGGQDQFNWEDV. Glycyl lysine isopeptide (Lys-Gly) (interchain with G-Cter in SUMO2) cross-links involve residues Lys22, Lys104, and Lys113. The span at 106–116 shows a compositional bias: basic and acidic residues; it reads EGGDPEEKGVD. Disordered regions lie at residues 106–133 and 146–260; these read EGGDPEEKGVDRLLGLGSASGSAGRVAL and SVFT…SSDD. The span at 117–132 shows a compositional bias: low complexity; sequence RLLGLGSASGSAGRVA. Phosphoserine is present on residues Ser123 and Ser127. A compositionally biased stretch (basic and acidic residues) spans 170–182; sequence RAEDKVEPDAESH. Residues 183–206 show a composition bias toward basic residues; it reads KKSKKEKKKKKKKHKKHKKKKDKE. Residues Ser215, Ser216, and Ser219 each carry the phosphoserine modification.

This chain is Multiple myeloma tumor-associated protein 2 homolog (Mmtag2), found in Mus musculus (Mouse).